The sequence spans 56 residues: Large ribosomal subunit protein uL30 (56 aa).

The protein belongs to the universal ribosomal protein uL30 family. In terms of assembly, part of the 50S ribosomal subunit.

The protein is Large ribosomal subunit protein uL30 of Nitratidesulfovibrio vulgaris (strain DSM 19637 / Miyazaki F) (Desulfovibrio vulgaris).